Consider the following 354-residue polypeptide: MSLFDTINSGGTQLLGVAWPTVWALVRILVVAVVILLCVAYLILWERKLIGWMHVRLGPNRVGPAGLLQPIADVLKLLLKEVIQPAQASRWIYLIAPIMVVVPAFAVWAVIPFQAGAVLGDINAGLLYAMAISSIGVYGVILAGWASNSKYAFLGAMRAAAQMVSYEISMGFALVVVLMTAGTLNLSGIVASQEHGIFASYGLNFLSWNWLPLLPMFVVYFISGIAETNRHPFDVVEGESEIVAGHMIDYSGMAFALFFLAEYINMIVISALAATLFLGGWSAPFGFLSFVPGIVWLVAKVFLLLSVFIWARATFPRYRYDQIMRLGWKIFIPVCVVWLVVVGFWIMSPLNIWK.

A run of 8 helical transmembrane segments spans residues 25–45 (LVRILVVAVVILLCVAYLILW), 91–111 (WIYLIAPIMVVVPAFAVWAVI), 126–146 (LLYAMAISSIGVYGVILAGWA), 170–190 (MGFALVVVLMTAGTLNLSGIV), 205–225 (FLSWNWLPLLPMFVVYFISGI), 267–287 (IVISALAATLFLGGWSAPFGF), 290–310 (FVPGIVWLVAKVFLLLSVFIW), and 330–350 (IFIPVCVVWLVVVGFWIMSPL).

The protein belongs to the complex I subunit 1 family. As to quaternary structure, NDH-1 is composed of 14 different subunits. Subunits NuoA, H, J, K, L, M, N constitute the membrane sector of the complex.

It is found in the cell inner membrane. The catalysed reaction is a quinone + NADH + 5 H(+)(in) = a quinol + NAD(+) + 4 H(+)(out). Functionally, NDH-1 shuttles electrons from NADH, via FMN and iron-sulfur (Fe-S) centers, to quinones in the respiratory chain. The immediate electron acceptor for the enzyme in this species is believed to be ubiquinone. Couples the redox reaction to proton translocation (for every two electrons transferred, four hydrogen ions are translocated across the cytoplasmic membrane), and thus conserves the redox energy in a proton gradient. This subunit may bind ubiquinone. The protein is NADH-quinone oxidoreductase subunit H of Paraburkholderia phytofirmans (strain DSM 17436 / LMG 22146 / PsJN) (Burkholderia phytofirmans).